Here is a 166-residue protein sequence, read N- to C-terminus: 2-amino-4-hydroxy-6-hydroxymethyldihydropteridine pyrophosphokinase (166 aa).

The protein belongs to the HPPK family.

The catalysed reaction is 6-hydroxymethyl-7,8-dihydropterin + ATP = (7,8-dihydropterin-6-yl)methyl diphosphate + AMP + H(+). The protein operates within cofactor biosynthesis; tetrahydrofolate biosynthesis; 2-amino-4-hydroxy-6-hydroxymethyl-7,8-dihydropteridine diphosphate from 7,8-dihydroneopterin triphosphate: step 4/4. Its function is as follows. Catalyzes the transfer of pyrophosphate from adenosine triphosphate (ATP) to 6-hydroxymethyl-7,8-dihydropterin, an enzymatic step in folate biosynthesis pathway. This is 2-amino-4-hydroxy-6-hydroxymethyldihydropteridine pyrophosphokinase (folK) from Streptococcus pyogenes serotype M18 (strain MGAS8232).